The following is a 737-amino-acid chain: Cilium assembly protein DZIP1L (737 aa).

The tract at residues 1-293 (MGFKGKYPQM…LKQSNEQFIQ (293 aa)) is interaction with Rab8. A coiled-coil region spans residues 98–132 (VTDLKEAHTTAQEEIATLRKSLSESNNEVVQLHKR). Residues 144 to 167 (YPCHLCTKNFISNEALNVHIGRKH) form a C2H2-type zinc finger. Disordered regions lie at residues 167–187 (HRVASPPSLTSATGKEKDRDK), 214–267 (ERNI…KEQL), 415–548 (SEFL…RKDA), 624–682 (KSPL…VSRD), and 698–737 (IRGASKSSLSSRPVPLPRKRVMFNTTEDGKSFNDSDDNLK). Basic and acidic residues-rich tracts occupy residues 244-266 (EPKEKDEDSGEARQSEASERKEQ) and 415-438 (SEFLKQKHDDDTYSIEEAPRKGSE). A compositionally biased stretch (polar residues) spans 457–469 (SAGSSDSNPTYTK). Positions 492 to 510 (SQEETENEEERSLTEEEGT) are enriched in acidic residues. A compositionally biased stretch (polar residues) spans 665–677 (SSEQQTRSPSPQR). Residues 724 to 737 (EDGKSFNDSDDNLK) are compositionally biased toward basic and acidic residues.

It belongs to the DZIP C2H2-type zinc-finger protein family. As to quaternary structure, component of a ciliary transition zone (TZ)-localized complex composed of DZIP1, Fam92 and Cby. Interacts directly with Cby. Interacts with Cep290 (via N-terminus). Interacts (via N-terminus) with Rab8. In terms of tissue distribution, in neurons of the second and third antennal segments, expressed at the tip of the dendrites.

It localises to the cytoplasm. It is found in the cytoskeleton. Its subcellular location is the microtubule organizing center. The protein localises to the centrosome. The protein resides in the centriole. It localises to the cilium basal body. Functionally, component of the DZIP1-Fam92-Cby complex which promotes ciliogenesis in sensory neurons and spermatocytes by acting downstream of Cep290 to initiate early ciliary membrane formation and thus transition zone (TZ) assembly. During spermatogenesis, also regulates distal elongation of the basal-body and their docking (anchoring) to the plasma membrane and as a consequence, regulates the initiation and proper elongation of axonemal microtubules. Within the complex, required to recruit or stabilize Rab8, Fam92 and Cby at the distal basal body of cilia to promote early ciliary membrane formation and initiate TZ assembly. Also acts with Fam92 to restrict Cep290 localization to the proximal part of the TZ. May also be involved in recruitment or stabilization of Mks1 at the TZ. The chain is Cilium assembly protein DZIP1L from Drosophila melanogaster (Fruit fly).